Here is a 602-residue protein sequence, read N- to C-terminus: Elongation factor 4 (602 aa).

The 183-residue stretch at 7-189 (SQIRNFSIIA…AIVHRIPPPA (183 aa)) folds into the tr-type G domain. Residues 19–24 (DHGKST) and 136–139 (NKID) contribute to the GTP site.

This sequence belongs to the TRAFAC class translation factor GTPase superfamily. Classic translation factor GTPase family. LepA subfamily.

It is found in the cell inner membrane. The enzyme catalyses GTP + H2O = GDP + phosphate + H(+). Required for accurate and efficient protein synthesis under certain stress conditions. May act as a fidelity factor of the translation reaction, by catalyzing a one-codon backward translocation of tRNAs on improperly translocated ribosomes. Back-translocation proceeds from a post-translocation (POST) complex to a pre-translocation (PRE) complex, thus giving elongation factor G a second chance to translocate the tRNAs correctly. Binds to ribosomes in a GTP-dependent manner. In Gloeobacter violaceus (strain ATCC 29082 / PCC 7421), this protein is Elongation factor 4.